The chain runs to 184 residues: Lactoylglutathione lyase (184 aa).

Ala2 carries the N-acetylalanine modification. Cysteines 19 and 20 form a disulfide. The VOC domain maps to 31-177 (LLQQTMLRIK…DGYWIEILNP (147 aa)). Residues Gln34 and Arg38 each coordinate substrate. Gln34 lines the Zn(2+) pocket. Lys88 is subject to N6-succinyllysine. Position 100 (Glu100) interacts with Zn(2+). Asn104 serves as a coordination point for substrate. Thr107 carries the phosphothreonine modification. Residues Arg123 and His127 each coordinate substrate. His127 is a Zn(2+) binding site. Cys139 carries the S-glutathionyl cysteine modification. Lys148 bears the N6-acetyllysine; alternate mark. Residue Lys148 is modified to N6-succinyllysine; alternate. 157 to 158 (KM) is a substrate binding site. Glu173 is a Zn(2+) binding site. Glu173 (proton donor/acceptor) is an active-site residue.

This sequence belongs to the glyoxalase I family. As to quaternary structure, homodimer. Zn(2+) serves as cofactor. Post-translationally, glutathionylation at Cys-139 inhibits enzyme activity. In terms of processing, phosphorylated at Thr-107 in the presence of CaMK2. However, this is a consensus site for phosphorylation by CK2 so phosphorylation may be mediated by CK2 rather than CaMK2. Phosphorylation is induced by TNF and suppresses the TNF-induced transcriptional activity of NF-kappa-B. Exists in a nitric oxide (NO)-modified form. The exact nature of the modification is unknown, but it suppresses the TNF-induced transcriptional activity of NF-kappa-B.

It carries out the reaction (R)-S-lactoylglutathione = methylglyoxal + glutathione. The protein operates within secondary metabolite metabolism; methylglyoxal degradation; (R)-lactate from methylglyoxal: step 1/2. Subject to competitive inhibition by methyl-gerfelin. In terms of biological role, catalyzes the conversion of hemimercaptal, formed from methylglyoxal and glutathione, to S-lactoylglutathione. Involved in the regulation of TNF-induced transcriptional activity of NF-kappa-B. Required for normal osteoclastogenesis. In Mus musculus (Mouse), this protein is Lactoylglutathione lyase (Glo1).